Consider the following 89-residue polypeptide: Small ribosomal subunit protein uS15 (89 aa).

The protein belongs to the universal ribosomal protein uS15 family. In terms of assembly, part of the 30S ribosomal subunit. Forms a bridge to the 50S subunit in the 70S ribosome, contacting the 23S rRNA.

In terms of biological role, one of the primary rRNA binding proteins, it binds directly to 16S rRNA where it helps nucleate assembly of the platform of the 30S subunit by binding and bridging several RNA helices of the 16S rRNA. Its function is as follows. Forms an intersubunit bridge (bridge B4) with the 23S rRNA of the 50S subunit in the ribosome. This Dictyoglomus turgidum (strain DSM 6724 / Z-1310) protein is Small ribosomal subunit protein uS15.